Here is a 140-residue protein sequence, read N- to C-terminus: Large ribosomal subunit protein uL16 (140 aa).

This sequence belongs to the universal ribosomal protein uL16 family. Part of the 50S ribosomal subunit.

In terms of biological role, binds 23S rRNA and is also seen to make contacts with the A and possibly P site tRNAs. In Malacoplasma penetrans (strain HF-2) (Mycoplasma penetrans), this protein is Large ribosomal subunit protein uL16.